Here is a 258-residue protein sequence, read N- to C-terminus: MEGFNIGGKSLKSRLLVGTGKFASYDLMKQAIEGCGTQVVTMALRRVNLDHKEDNILEYIPKDTILLPNTSGARNAEEAIRIARLSRAMGCGDWVKIEVISDQKYLLPDNEETVKATEVLAKEGFIVLPYMNPDLMIAKRLESVGAAAVMPLGSPIGTNKGLQTKEMIRILIEEIKVPIIVDAGIGKPSQAAEAMEMGAEAVLVNTAIATAQNPVKMAKAFELAVRAGRLAFNGVTAPQAKVARASSPLTGFLHEGEA.

The active-site Schiff-base intermediate with DXP is Lys96. 1-deoxy-D-xylulose 5-phosphate is bound by residues Gly157, 183–184 (AG), and 205–206 (NT).

This sequence belongs to the ThiG family. As to quaternary structure, homotetramer. Forms heterodimers with either ThiH or ThiS.

It localises to the cytoplasm. It catalyses the reaction [ThiS sulfur-carrier protein]-C-terminal-Gly-aminoethanethioate + 2-iminoacetate + 1-deoxy-D-xylulose 5-phosphate = [ThiS sulfur-carrier protein]-C-terminal Gly-Gly + 2-[(2R,5Z)-2-carboxy-4-methylthiazol-5(2H)-ylidene]ethyl phosphate + 2 H2O + H(+). The protein operates within cofactor biosynthesis; thiamine diphosphate biosynthesis. Catalyzes the rearrangement of 1-deoxy-D-xylulose 5-phosphate (DXP) to produce the thiazole phosphate moiety of thiamine. Sulfur is provided by the thiocarboxylate moiety of the carrier protein ThiS. In vitro, sulfur can be provided by H(2)S. The protein is Thiazole synthase of Alkaliphilus metalliredigens (strain QYMF).